Here is a 232-residue protein sequence, read N- to C-terminus: Phosphoglycolate phosphatase (232 aa).

Aspartate 8 (nucleophile) is an active-site residue. Residues aspartate 8 and aspartate 10 each contribute to the Mg(2+) site. Substrate is bound at residue lysine 155. Residues aspartate 178 and aspartate 182 each coordinate Mg(2+).

Belongs to the archaeal SPP-like hydrolase family. It depends on Mg(2+) as a cofactor.

It carries out the reaction 2-phosphoglycolate + H2O = glycolate + phosphate. Functionally, catalyzes the dephosphorylation of 2-phosphoglycolate. This chain is Phosphoglycolate phosphatase, found in Methanospirillum hungatei JF-1 (strain ATCC 27890 / DSM 864 / NBRC 100397 / JF-1).